Consider the following 172-residue polypeptide: Adenine phosphoribosyltransferase (172 aa).

Belongs to the purine/pyrimidine phosphoribosyltransferase family. In terms of assembly, homodimer.

It localises to the cytoplasm. It catalyses the reaction AMP + diphosphate = 5-phospho-alpha-D-ribose 1-diphosphate + adenine. It functions in the pathway purine metabolism; AMP biosynthesis via salvage pathway; AMP from adenine: step 1/1. Catalyzes a salvage reaction resulting in the formation of AMP, that is energically less costly than de novo synthesis. This chain is Adenine phosphoribosyltransferase, found in Staphylococcus aureus (strain Mu3 / ATCC 700698).